A 526-amino-acid chain; its full sequence is ATP synthase subunit alpha (526 aa).

174 to 181 (GDRKTGKT) lines the ATP pocket. Basic and acidic residues predominate over residues 505 to 520 (FEPARSEVKVETRPQE). The interval 505-526 (FEPARSEVKVETRPQEEEGEEG) is disordered.

The protein belongs to the ATPase alpha/beta chains family. As to quaternary structure, F-type ATPases have 2 components, CF(1) - the catalytic core - and CF(0) - the membrane proton channel. CF(1) has five subunits: alpha(3), beta(3), gamma(1), delta(1), epsilon(1). CF(0) has three main subunits: a(1), b(2) and c(9-12). The alpha and beta chains form an alternating ring which encloses part of the gamma chain. CF(1) is attached to CF(0) by a central stalk formed by the gamma and epsilon chains, while a peripheral stalk is formed by the delta and b chains.

Its subcellular location is the cell membrane. The enzyme catalyses ATP + H2O + 4 H(+)(in) = ADP + phosphate + 5 H(+)(out). Its function is as follows. Produces ATP from ADP in the presence of a proton gradient across the membrane. The alpha chain is a regulatory subunit. In Rubrobacter xylanophilus (strain DSM 9941 / JCM 11954 / NBRC 16129 / PRD-1), this protein is ATP synthase subunit alpha.